Consider the following 967-residue polypeptide: MTSCILAGSLETTPKVSPGDPEAKPLIFTFVPTLRRLPTHIQLADTSKFLVKIPEEPTDKSPETVNRFEYSDHMTFSSESKQERVQRILDYPSEVSGRNSQQKEFNTKEPQGMQKGDLFKAEYVFIVDSDGEDEATCRQGEQGPPGGPGNIATRPKSLAISSSLASDVVRPKVRGADLKTSSHPEIPHGIAPQQKHGLLISPTTSEQLAHKPPAFSFVSPTNQKTPPVPANVSGATVLREFHTRRLDVTGASEEETTTYFHSTAHDSPLSAWKGASTLVVSPSAQLSGSSLCGSNVTDHTRGLASEAQKKMSTSNVLNPKEDVRTCPAPASGASLTSPSASYIPVRIVMHSLSPSPKPLTSSSHGSLSTVCSQMSSSGSLSKSGLKSPVPSRLSLLTAILKSNPSHQRPLSPASCPTFSLNSLASSTLALDQKVKQTPPTSKKSLSSGSLTTGSTEQEHQASAASYQPCHLPFFSKTTPLSQAQPLSPLALASNSCASMDIEKIPGSTLRSNTTSPQPQTDTFSLADVPSVTPVLSPLSSSKGRKDGDSRTPEKNRNICIQPSTLASTPPVDESLALSSSGKGFHPSPALSDLIDRSKRACSQQHPGQRPSPSALPTPPVSRAASASHPHLGCSILPLQSSLTQTLQPSPSALRPSCGSATCPSRTQMPENTASNHSSRVSTPSLPVSLTRTKELFSPCALSMSAGPENKKPKQYKTMSSYKAFAAIPTNTLLLEQKALDEPARTESNSKASVLDLPVEFCFPAQLRQQTEELCATIDKVLQDSLSMHSSDSPSRPPQTMLGSETIKTPTTHPRAAGRETKYANLSSSSSTASESQLTKPGVIRPVPVKSKLLLRKDEEVYEPNPFSKYLEDNSGLFSEQDMAIPHKPVSLHPLYQSKLYPPAKSLLHPQTLSHADCLTPGSFSHLSSFSVRDEQEKSPTLLSQDTYNKLGHPMVTIPEHDTLDSKE.

A Phosphoserine modification is found at Ser-129. Disordered stretches follow at residues Glu-132–Arg-154, Gly-302–Thr-336, Gln-432–Ser-462, Gly-506–His-628, Gln-644–Leu-685, Ser-786–Thr-838, and Phe-929–Glu-967. The segment at Pro-144–Thr-811 is required for interaction with ISL1. Positions Thr-437–Thr-455 are enriched in low complexity. Residues Thr-508–Phe-523 are compositionally biased toward polar residues. Over residues Val-528–Ser-541 the composition is skewed to low complexity. Over residues Gly-543–Arg-556 the composition is skewed to basic and acidic residues. Polar residues-rich tracts occupy residues Ile-558 to Ser-567 and Gly-658 to Leu-685. Position 792 is a phosphoserine (Ser-792). The segment covering Met-800 to Thr-811 has biased composition (polar residues). The segment covering Ser-826–Ser-835 has biased composition (low complexity). Polar residues predominate over residues Ser-938–Tyr-947. Residues Pro-958 to Glu-967 are compositionally biased toward basic and acidic residues.

Directly interacts with LMNA. Interacts with ISL1 (via N-terminal domain); the interaction represses ISL1 transactivator activity. Interactions of ISL1 with MLIP1 and GCN5/KAT2A may be mutually exclusive. May be ubiquitinated by UBE3C ubiquitin ligase; ubiquitination is followed by protein degradation. Predominantly expressed in the heart and skeletal muscle, but detected at lower levels in the lung and brain (at protein level). Also detected in smooth muscle, thymus and kidney. In brain, expressed by a subpopulation of cells within the hippocampus and cortex. In heart, expressed by cardiomyocytes. Expression is reduced in hypertrophic hearts at the transcript level. However, expression in hypertrophic hearts induced by transverse aortic constriction do not differ from control at the protein level.

The protein localises to the nucleus. The protein resides in the nucleus envelope. It is found in the PML body. It localises to the cytoplasm. Its subcellular location is the cytosol. The protein localises to the cell membrane. The protein resides in the sarcolemma. In terms of biological role, required for myoblast differentiation into myotubes, possibly acting as a transcriptional regulator of the myogenic program. Required for cardiac adaptation to stress through integrated regulation of the AKT/mTOR pathways and FOXO1. Regulates cardiac homeostasis and plays a role in the protection against cardiac hypertrophy. Binds chromatin. May act as a transcriptional cofactor for ISL1, repressing its transcriptional activity. May also repress MYOCD transcriptional activity. The polypeptide is Muscular LMNA-interacting protein (Mus musculus (Mouse)).